Consider the following 187-residue polypeptide: MDVILLERVEKLGQMGQVVKVKPGFARNFLLPQKKALRATKENLAYFETQKARLEARNLELRKEAEQVAGSMGNVSVVITRQSGETGQLYGSVSSRDIADALAEKQIQVERRQVAIDQPIKTLGLFPVRIVLHPEVFVTITVNVARSADEAELQAQRGGMVTGLREEDEEEEVEETATEEGGEETAA.

Positions 155 to 187 are disordered; it reads AQRGGMVTGLREEDEEEEVEETATEEGGEETAA. The span at 166–187 shows a compositional bias: acidic residues; sequence EEDEEEEVEETATEEGGEETAA.

Belongs to the bacterial ribosomal protein bL9 family.

Its function is as follows. Binds to the 23S rRNA. The sequence is that of Large ribosomal subunit protein bL9 from Rhodospirillum centenum (strain ATCC 51521 / SW).